The chain runs to 570 residues: Mitoguardin 1 (570 aa).

Residues 34–54 (GLKKIIAVAAISGVSLIFLAC) traverse the membrane as a helical segment.

Belongs to the mitoguardin family. As to quaternary structure, homodimer and heterodimer; forms heterodimers with miga2.

The protein localises to the mitochondrion outer membrane. Its function is as follows. Regulator of mitochondrial fusion: acts by forming homo- and heterodimers at the mitochondrial outer membrane and facilitating the formation of pld6/MitoPLD dimers. May act by regulating phospholipid metabolism via pld6/MitoPLD. The chain is Mitoguardin 1 from Xenopus laevis (African clawed frog).